Here is a 437-residue protein sequence, read N- to C-terminus: Tryptophan--tRNA ligase (437 aa).

Positions 74-82 (PSGKVHLGH) match the 'HIGH' region motif. The 'KMSKS' region motif lies at 321–325 (KMSSS).

The protein belongs to the class-I aminoacyl-tRNA synthetase family.

It is found in the cytoplasm. It catalyses the reaction tRNA(Trp) + L-tryptophan + ATP = L-tryptophyl-tRNA(Trp) + AMP + diphosphate + H(+). The protein is Tryptophan--tRNA ligase of Methanosarcina acetivorans (strain ATCC 35395 / DSM 2834 / JCM 12185 / C2A).